Reading from the N-terminus, the 398-residue chain is Cathepsin D (398 aa).

An N-terminal signal peptide occupies residues Met1–Ala20. Residues Leu21–Ala63 constitute a propeptide, activation peptide. The 318-residue stretch at Tyr78–Ala395 folds into the Peptidase A1 domain. Asp96 is a catalytic residue. Cysteines 109 and 116 form a disulfide. N-linked (GlcNAc...) asparagine glycosylation is found at Asn133 and Asn251. Cys274 and Cys278 form a disulfide bridge. The active site involves Asp283. Residues Cys317 and Cys354 are joined by a disulfide bond.

Belongs to the peptidase A1 family. In terms of assembly, consists of a light chain and a heavy chain. Oocytic yolk, preovulatory follicles, liver.

The protein localises to the lysosome. It catalyses the reaction Specificity similar to, but narrower than, that of pepsin A. Does not cleave the 4-Gln-|-His-5 bond in B chain of insulin.. Its function is as follows. Acid protease active in intracellular protein breakdown. In chicken it is a key enzyme for yolk formation as it is capable of catalyzing intra oocytic break down of protein components of both vitellogenin and VLDL. The sequence is that of Cathepsin D (CTSD) from Gallus gallus (Chicken).